Here is a 155-residue protein sequence, read N- to C-terminus: Microsomal glutathione S-transferase 1 (155 aa).

Residues 3–9 (DLTELMK) lie on the Lumenal side of the membrane. A helical transmembrane segment spans residues 10-33 (NEVFMAFASYATIVLSKMMFMSTA). At 34-62 (TAFYRLTRKVFANPEDCSSFGKGENAKKY) the chain is on the cytoplasmic side. Arginine 38 contacts glutathione. N6-acetyllysine is present on residues lysine 42, lysine 55, and lysine 60. A helical membrane pass occupies residues 63–96 (LRTDERVERVRRAHLNDLENIVPFLGIGLLYSLS). 4 residues coordinate glutathione: arginine 73, arginine 74, histidine 76, and glutamate 81. At 97–99 (GPD) the chain is on the lumenal side. A helical membrane pass occupies residues 100–123 (LSTAILHFRLFVGARIYHTIAYLT). Residue tyrosine 121 coordinates glutathione. Topologically, residues 124 to 128 (PLPQP) are cytoplasmic. Residues 129–148 (NRGLAFFLGYGVTLSMAYRL) traverse the membrane as a helical segment. Topologically, residues 149 to 155 (LKSRLYL) are lumenal.

This sequence belongs to the MAPEG family. In terms of assembly, homotrimer; The trimer binds only one molecule of glutathione.

It localises to the endoplasmic reticulum membrane. The protein resides in the mitochondrion outer membrane. The enzyme catalyses RX + glutathione = an S-substituted glutathione + a halide anion + H(+). Conjugation of reduced glutathione to a wide number of exogenous and endogenous hydrophobic electrophiles. The chain is Microsomal glutathione S-transferase 1 (MGST1) from Sus scrofa (Pig).